The chain runs to 499 residues: MWGIIVPFFSASLMCSLVAVVRCQQDTDHFANVTNTIDSLLKGYDIRLRPSFGGAPLEIGIEVILASFDSISEVDMDYTITMYLNQYWRDERLQFIFNESLDLGENRSVTTMTLTGAFAEKIWVPDTFLANDKNSFLHDITEKNKMVRLYGNGSLVYGMRFTTTLACMMDLHNYPLDHQECTVEIESYGYTMDDIVLYWLNDRGAVTGVEDVSLPQFSITNYATINKIEELSTGDYQRLSLIFQLQRNIGYFIFQTYLPSILIVMLSWVSFWINHEATSARVALGITTVLTMTTISNGVRSSLPRISYVKAIDIYLVMCFVFVFAALLEYAAVNYTYWGARAKRKAKRLRERATSVRKRVDDGDQMNNTNMDTVELKEVHMVPTSVGVTNSQSFNLDLDDGSGDDTGFRVVPPIPRSFTHSHATTHGYIPTNVVRRRSSSHVPPRRRRLLSHFRQKAKSIKVKIPRVQDVNTIDKYARLMFPLLFIIFNTSYWSVYLLT.

Residues 1–23 form the signal peptide; sequence MWGIIVPFFSASLMCSLVAVVRC. The Extracellular segment spans residues 24-251; that stretch reads QQDTDHFANV…IFQLQRNIGY (228 aa). N-linked (GlcNAc...) asparagine glycans are attached at residues Asn32, Asn98, Asn106, and Asn152. Cysteines 167 and 181 form a disulfide. 3 helical membrane passes run 252–273, 278–299, and 311–333; these read FIFQTYLPSILIVMLSWVSFWI, TSARVALGITTVLTMTTISNGV, and AIDIYLVMCFVFVFAALLEYAAV. Residues 334–475 are Cytoplasmic-facing; it reads NYTYWGARAK…RVQDVNTIDK (142 aa). The chain crosses the membrane as a helical span at residues 476–499; it reads YARLMFPLLFIIFNTSYWSVYLLT.

It belongs to the ligand-gated ion channel (TC 1.A.9) family. Gamma-aminobutyric acid receptor (TC 1.A.9.5) subfamily. In terms of assembly, generally pentameric. There are five types of GABA(A) receptor chains: alpha, beta, gamma, delta, and rho.

The protein localises to the postsynaptic cell membrane. The protein resides in the cell membrane. Functionally, GABA, an inhibitory neurotransmitter, mediates neuronal inhibition by binding to the GABA/benzodiazepine receptor and opening an integral chloride channel. In Lymnaea stagnalis (Great pond snail), this protein is Gamma-aminobutyric acid receptor subunit beta.